The chain runs to 334 residues: Serine/Arginine-related protein 53 (334 aa).

A compositionally biased stretch (basic and acidic residues) spans 1–13; that stretch reads MGRRSSDTEEESR. Disordered regions lie at residues 1 to 173, 201 to 222, and 241 to 290; these read MGRR…IKAG, LKAK…QATL, and VQQT…SIPT. A compositionally biased stretch (basic residues) spans 14–24; the sequence is SKRKKKHRRRS. The span at 44-62 shows a compositional bias: basic and acidic residues; that stretch reads PRSESRSWSRDRQPRSHSY. The segment covering 78–118 has biased composition (basic residues); sequence SRRKRSRSRSRGRGKSYRVQRSRSKSRTRRSRSRPRPRSHS. 3 stretches are compositionally biased toward basic and acidic residues: residues 132–166, 201–218, and 247–262; these read RSRD…KRGD, LKAK…KEED, and SSKD…EVKH. A coiled-coil region spans residues 180–234; it reads AEQAKARLQLVLEAAAKADEALKAKERNEEEAKRRKEEDQATLGEQVKRVKEIEA.

Interacts (via Arg/Ser-rich domain) with LUC7L3, RBM39 and RSF1. Phosphorylated.

The protein resides in the nucleus speckle. It localises to the nucleus. The protein localises to the cytoplasm. In terms of biological role, plays a role in pre-mRNA splicing. Involved in both constitutive and alternative pre-mRNA splicing. May have a role in the recognition of the 3' splice site during the second step of splicing. This Rattus norvegicus (Rat) protein is Serine/Arginine-related protein 53 (Rsrc1).